The chain runs to 336 residues: tRNA N6-adenosine threonylcarbamoyltransferase (336 aa).

Fe cation-binding residues include H112 and H116. Substrate is bound by residues 136 to 140 (LVSGG), D169, G182, and N276. D304 contacts Fe cation.

It belongs to the KAE1 / TsaD family. The cofactor is Fe(2+).

The protein resides in the cytoplasm. It catalyses the reaction L-threonylcarbamoyladenylate + adenosine(37) in tRNA = N(6)-L-threonylcarbamoyladenosine(37) in tRNA + AMP + H(+). In terms of biological role, required for the formation of a threonylcarbamoyl group on adenosine at position 37 (t(6)A37) in tRNAs that read codons beginning with adenine. Is involved in the transfer of the threonylcarbamoyl moiety of threonylcarbamoyl-AMP (TC-AMP) to the N6 group of A37, together with TsaE and TsaB. TsaD likely plays a direct catalytic role in this reaction. The polypeptide is tRNA N6-adenosine threonylcarbamoyltransferase (Francisella philomiragia subsp. philomiragia (strain ATCC 25017 / CCUG 19701 / FSC 153 / O#319-036)).